Consider the following 541-residue polypeptide: Solute carrier family 22 member 10 (541 aa).

Topologically, residues 1 to 15 are cytoplasmic; it reads MAFEELLSQVGGLGR. A helical transmembrane segment spans residues 16 to 36; the sequence is FQMLHLVFILPSLMLLIPHIL. The Extracellular segment spans residues 37–145; it reads LENFAAAIPG…DLVCDYQSLK (109 aa). N-linked (GlcNAc...) asparagine glycans are attached at residues N56 and N102. A helical transmembrane segment spans residues 146-166; that stretch reads SVVQFLLLTGMLVGGIIGGHV. Over 167-193 the chain is Cytoplasmic; the sequence is SDRFGRRFILRWCLLQLAITDTCAAFA. A helical transmembrane segment spans residues 194-214; that stretch reads PTFPVYCVLRFLAGFSSMIII. At 215–230 the chain is on the extracellular side; the sequence is SNNSLPITEWIRPNSK. Residues 231–251 form a helical membrane-spanning segment; that stretch reads ALVVILSSGALSIGQIILGGL. Residues 252–259 are Cytoplasmic-facing; the sequence is AYVFRDWQ. A helical transmembrane segment spans residues 260–280; it reads TLHVVASVPFFVFFLLSRWLV. Over 281-349 the chain is Extracellular; that stretch reads ESARWLIITN…LFRNPSMRKR (69 aa). A helical membrane pass occupies residues 350 to 370; that stretch reads ICILVFLRFANTIPFYGTMVN. Residues 371-377 lie on the Cytoplasmic side of the membrane; the sequence is LQHVGSN. Residues 378 to 398 traverse the membrane as a helical segment; sequence IFLLQVLYGAVALIVRCLALL. The Extracellular portion of the chain corresponds to 399–406; that stretch reads TLNHMGRR. A helical membrane pass occupies residues 407–427; sequence ISQILFMFLVGLSILANTFVP. Topologically, residues 428–436 are cytoplasmic; the sequence is KEMQTLRVA. Residues 437–457 traverse the membrane as a helical segment; that stretch reads LACLGIGCSAATFSSVAVHFI. Residues 458–472 lie on the Extracellular side of the membrane; that stretch reads ELIPTVLRARASGID. Residues 473–493 form a helical membrane-spanning segment; the sequence is LTASRIGAALAPLLMTLTVFF. Residues 494 to 495 are Cytoplasmic-facing; sequence TT. Residues 496 to 516 traverse the membrane as a helical segment; it reads LPWIIYGIFPIIGGLIVFLLP. The Extracellular portion of the chain corresponds to 517 to 541; it reads ETKNLPLPDTIKDVENQKKNLKEKA.

This sequence belongs to the major facilitator (TC 2.A.1) superfamily. Organic cation transporter (TC 2.A.1.19) family. In terms of tissue distribution, detected in fetal and adult liver, and in adult kidney.

The protein resides in the membrane. This Homo sapiens (Human) protein is Solute carrier family 22 member 10 (SLC22A10).